We begin with the raw amino-acid sequence, 1235 residues long: Gem-associated protein 5 (1235 aa).

A WD 1 repeat occupies 55–102 (STRINILALDVSPMWGLGNGGPTKPFAIVGDDLSVQVWDCALGEAVIG). The segment at 227–263 (NNLALSAEEWRSRNGGQEEKPKTKPPPLTKSKAAESD) is disordered. Positions 234-248 (EEWRSRNGGQEEKPK) are enriched in basic and acidic residues. Ser-289, Ser-290, Ser-351, and Ser-354 each carry phosphoserine. Residues 340–368 (DCEPTKPTGPLSDASTISNKNDASDSTEG) form a disordered region. Positions 352 to 368 (DASTISNKNDASDSTEG) are enriched in polar residues. Thr-355 bears the Phosphothreonine mark. Ser-357 is modified (phosphoserine). Thr-411 is modified (phosphothreonine). 7 WD repeats span residues 428 to 469 (ISAE…HAGK), 475 to 512 (KTAG…KMLR), 565 to 605 (TVAF…TSCL), 611 to 650 (YVSS…VKTH), 690 to 730 (TIVN…EKSW), 739 to 779 (LFAR…RNWK), and 788 to 828 (TEKA…KPPL). Positions 443–447 (LETLL) match the LXXLL motif motif. Residues 963-980 (KEQNNRSAKECPKCKEQS) are compositionally biased toward basic and acidic residues. Positions 963–983 (KEQNNRSAKECPKCKEQSPDS) are disordered.

In terms of assembly, component of the core survival motor neuron (SMN) complex composed of Smn, Gem2, Gem3, rig/Gem5 and one of 3 almost identical Gem4 paralogs encoded by Glos/Gem4a, Gem4b or Gem4c. Interacts with nuclear receptors EcR, svp (seven up), usp (ultraspiracle), Hr39 and Hr3. As to expression, expressed in the brain and salivary glands of early and late second instar larvae. Expressed in nurse cells and oocytes.

It is found in the nucleus. The protein resides in the cytoplasm. The protein localises to the U-body. Its subcellular location is the gem. Functionally, component of the survival motor neuron (SMN) complex that catalyzes the assembly of small nuclear ribonucleoproteins (snRNPs), the building blocks of the spliceosome, and thereby plays an important role in the splicing of cellular pre-mRNAs. Nuclear receptor cofactor for the ecdysone-regulated processes of molting and puparium formation. Acts downstream from ecdysone biosynthesis and release to control the expression of specific ecdysone-regulated genes such as Eip74EF (E74). Essential in muscle and neuronal tissues for motor function, including climbing ability and flight. The protein is Gem-associated protein 5 of Drosophila melanogaster (Fruit fly).